Reading from the N-terminus, the 473-residue chain is MNLKTLIGLEIHVELSTKTKMFCGCKNEFGQIPNTNVCPICLGHPGALPHMNKQALRYAIMAGLAFDCDIANEFKMDRKKYFYPDLVKGYQITQEDQPLCTNGYIELKTSTKNKKVRIRRIHIEEDTGKSIHNESGNTLMDYNRAGVPLIEIVSEPDMSNPDEAREFLETLRERIKYLEISDVKMSEGSLRCDVNINVYDEDSDFKTKISEIKNLNSFKSVSKALIYEQERHMQLAKENKIGEKETRRWDEDTQTTIVMRHKEEGNDYRFSVEGDIPKTYVEQSYIEEIKKNLPELPEMRKERFMNEYKIDEYDADILTRNGYLADYYEKVVEISNDPVQSSNWLLGDVLRQVNENEIEIEEMNMSAENLAKLIKLSSAKKINNQTAKKVLREMFNENFDPEVYVKEKGLLQVDDDNLLQQIVDEVVAENPESIESIRNGKDRAIGFLVGQCMKKSKGKGNPQKFNELIKEKI.

The protein belongs to the GatB/GatE family. GatB subfamily. As to quaternary structure, heterotrimer of A, B and C subunits.

The enzyme catalyses L-glutamyl-tRNA(Gln) + L-glutamine + ATP + H2O = L-glutaminyl-tRNA(Gln) + L-glutamate + ADP + phosphate + H(+). It catalyses the reaction L-aspartyl-tRNA(Asn) + L-glutamine + ATP + H2O = L-asparaginyl-tRNA(Asn) + L-glutamate + ADP + phosphate + 2 H(+). In terms of biological role, allows the formation of correctly charged Asn-tRNA(Asn) or Gln-tRNA(Gln) through the transamidation of misacylated Asp-tRNA(Asn) or Glu-tRNA(Gln) in organisms which lack either or both of asparaginyl-tRNA or glutaminyl-tRNA synthetases. The reaction takes place in the presence of glutamine and ATP through an activated phospho-Asp-tRNA(Asn) or phospho-Glu-tRNA(Gln). The polypeptide is Aspartyl/glutamyl-tRNA(Asn/Gln) amidotransferase subunit B (Finegoldia magna (strain ATCC 29328 / DSM 20472 / WAL 2508) (Peptostreptococcus magnus)).